Here is a 392-residue protein sequence, read N- to C-terminus: L-rhamnonate dehydratase (392 aa).

Substrate-binding residues include H22 and R48. The Mg(2+) site is built by D214, E240, and E268. The Proton acceptor role is filled by H318. E338 lines the substrate pocket.

It belongs to the mandelate racemase/muconate lactonizing enzyme family. RhamD subfamily. As to quaternary structure, homooctamer; tetramer of dimers. It depends on Mg(2+) as a cofactor.

The enzyme catalyses L-rhamnonate = 2-dehydro-3-deoxy-L-rhamnonate + H2O. Catalyzes the dehydration of L-rhamnonate to 2-keto-3-deoxy-L-rhamnonate (KDR). The sequence is that of L-rhamnonate dehydratase from Burkholderia cenocepacia (strain HI2424).